We begin with the raw amino-acid sequence, 860 residues long: Envelope glycoprotein gp160 (860 aa).

Positions 1-22 are cleaved as a signal peptide; the sequence is MEPGRNQLFVVILLTSACLVYC. The Extracellular segment spans residues 23–678; it reads SQYVTVFYGI…LTSWVKYIQY (656 aa). The N-linked (GlcNAc...) asparagine; by host glycan is linked to asparagine 37. Cysteine 44 and cysteine 57 are disulfide-bonded. 21 N-linked (GlcNAc...) asparagine; by host glycosylation sites follow: asparagine 70, asparagine 79, asparagine 112, asparagine 119, asparagine 144, asparagine 152, asparagine 194, asparagine 206, asparagine 238, asparagine 241, asparagine 272, asparagine 278, asparagine 289, asparagine 300, asparagine 310, asparagine 365, asparagine 371, asparagine 398, asparagine 410, asparagine 460, and asparagine 465. 5 cysteine pairs are disulfide-bonded: cysteine 101-cysteine 214, cysteine 108-cysteine 205, cysteine 113-cysteine 166, cysteine 227-cysteine 257, and cysteine 237-cysteine 249. A V1 region spans residues 113 to 165; that stretch reads CSRVQGNTTTPNPRTSSSTTSRPPTSAASIINETSNCIENNTCAGLGYEEMMQ. Residues 118 to 139 are disordered; sequence GNTTTPNPRTSSSTTSRPPTSA. The segment covering 119–139 has biased composition (low complexity); the sequence is NTTTPNPRTSSSTTSRPPTSA. Positions 166–205 are V2; it reads CEFNMKGLEQDKKRRYKDTWYLEDVVCDNTTAGTCYMRHC. Positions 305-337 are V3; it reads CKRPGNKTVLPITLMSGLVFHSQPINTRPRQAW. An intrachain disulfide couples cysteine 305 to cysteine 338. Intrachain disulfides connect cysteine 390-cysteine 444 and cysteine 397-cysteine 417. Residues 397 to 417 are V4; it reads CNMTWFLNWVEDKNQTRRNYC. The tract at residues 460–468 is V5; the sequence is NRTHTNITF. Residues 511–531 form a fusion peptide region; that stretch reads GVFVLGFLGFLATAGSAMGAR. Residues 574–590 are immunosuppression; sequence LQARVTAIEKYLKHQAQ. Asparagine 610, asparagine 619, and asparagine 635 each carry an N-linked (GlcNAc...) asparagine; by host glycan. Positions 623-644 form a coiled coil; the sequence is QEWEKQVRYLEANISQSLEEAQ. The segment at 656 to 677 is MPER; binding to GalCer; sequence KLNSWDILGNWFDLTSWVKYIQ. The chain crosses the membrane as a helical span at residues 679–699; it reads GVHIVVGIIALRIAIYVVQLL. Residues 700–860 are Cytoplasmic-facing; it reads SRFRKGYRPV…IRQGAELALL (161 aa). A YXXV motif; contains endocytosis signal motif is present at residues 706–709; sequence YRPV. Residue cysteine 772 is the site of S-palmitoyl cysteine; by host attachment. Residues 859 to 860 carry the Di-leucine internalization motif motif; it reads LL.

The mature envelope protein (Env) consists of a homotrimer of non-covalently associated gp120-gp41 heterodimers. The resulting complex protrudes from the virus surface as a spike. There seems to be as few as 10 spikes on the average virion. Interacts with human CD4, CCR5 and CXCR4, to form a P4HB/PDI-CD4-CXCR4-gp120 complex. Gp120 also interacts with the C-type lectins CD209/DC-SIGN and CLEC4M/DC-SIGNR (collectively referred to as DC-SIGN(R)). Gp120 and gp41 interact with GalCer. In terms of assembly, the mature envelope protein (Env) consists of a homotrimer of non-covalently associated gp120-gp41 heterodimers. The resulting complex protrudes from the virus surface as a spike. There seems to be as few as 10 spikes on the average virion. In terms of processing, specific enzymatic cleavages in vivo yield mature proteins. Envelope glycoproteins are synthesized as an inactive precursor that is heavily N-glycosylated and processed likely by host cell furin in the Golgi to yield the mature SU and TM proteins. The cleavage site between SU and TM requires the minimal sequence [KR]-X-[KR]-R. Post-translationally, palmitoylation of the transmembrane protein and of Env polyprotein (prior to its proteolytic cleavage) is essential for their association with host cell membrane lipid rafts. Palmitoylation is therefore required for envelope trafficking to classical lipid rafts, but not for viral replication.

It is found in the virion membrane. Its subcellular location is the host cell membrane. The protein localises to the host endosome membrane. The surface protein gp120 (SU) attaches the virus to the host lymphoid cell by binding to the primary receptor CD4. This interaction induces a structural rearrangement creating a high affinity binding site for a chemokine coreceptor like CXCR4 and/or CCR5. This peculiar 2 stage receptor-interaction strategy allows gp120 to maintain the highly conserved coreceptor-binding site in a cryptic conformation, protected from neutralizing antibodies. Since CD4 also displays a binding site for the disulfide-isomerase P4HB/PDI, a P4HB/PDI-CD4-CXCR4-gp120 complex may form. In that complex, P4HB/PDI could reach and reduce gp120 disulfide bonds, causing major conformational changes in gp120. TXN, another PDI family member could also be involved in disulfide rearrangements in Env during fusion. These changes are transmitted to the transmembrane protein gp41 and are thought to activate its fusogenic potential by unmasking its fusion peptide. Functionally, the surface protein gp120 is a ligand for CD209/DC-SIGN and CLEC4M/DC-SIGNR, which are respectively found on dendritic cells (DCs), and on endothelial cells of liver sinusoids and lymph node sinuses. These interactions allow capture of viral particles at mucosal surfaces by these cells and subsequent transmission to permissive cells. DCs are professional antigen presenting cells, critical for host immunity by inducing specific immune responses against a broad variety of pathogens. They act as sentinels in various tissues where they take up antigen, process it, and present it to T-cells following migration to lymphoid organs. HIV subverts the migration properties of dendritic cells to gain access to CD4+ T-cells in lymph nodes. Virus transmission to permissive T-cells occurs either in trans (without DCs infection, through viral capture and transmission), or in cis (following DCs productive infection, through the usual CD4-gp120 interaction), thereby inducing a robust infection. In trans infection, bound virions remain infectious over days and it is proposed that they are not degraded, but protected in non-lysosomal acidic organelles within the DCs close to the cell membrane thus contributing to the viral infectious potential during DCs' migration from the periphery to the lymphoid tissues. On arrival at lymphoid tissues, intact virions recycle back to DCs' cell surface allowing virus transmission to CD4+ T-cells. Virion capture also seems to lead to MHC-II-restricted viral antigen presentation, and probably to the activation of HIV-specific CD4+ cells. Its function is as follows. The transmembrane protein gp41 (TM) acts as a class I viral fusion protein. Under the current model, the protein has at least 3 conformational states: pre-fusion native state, pre-hairpin intermediate state, and post-fusion hairpin state. During fusion of viral and target intracellular membranes, the coiled coil regions (heptad repeats) assume a trimer-of-hairpins structure, positioning the fusion peptide in close proximity to the C-terminal region of the ectodomain. The formation of this structure appears to drive apposition and subsequent fusion of viral and target cell membranes. Complete fusion occurs in host cell endosomes and is dynamin-dependent, however some lipid transfer might occur at the plasma membrane. The virus undergoes clathrin-dependent internalization long before endosomal fusion, thus minimizing the surface exposure of conserved viral epitopes during fusion and reducing the efficacy of inhibitors targeting these epitopes. Membranes fusion leads to delivery of the nucleocapsid into the cytoplasm. In terms of biological role, the envelope glycoprotein gp160 precursor down-modulates cell surface CD4 antigen by interacting with it in the endoplasmic reticulum and blocking its transport to the cell surface. The gp120-gp41 heterodimer seems to contribute to T-cell depletion during HIV-1 infection. The envelope glycoproteins expressed on the surface of infected cells induce apoptosis through an interaction with uninfected cells expressing the receptor (CD4) and the coreceptors CXCR4 or CCR5. This type of bystander killing may be obtained by at least three distinct mechanisms. First, the interaction between the 2 cells can induce cellular fusion followed by nuclear fusion within the syncytium. Syncytia are condemned to die from apoptosis. Second, the 2 interacting cells may not fuse entirely and simply exchange plasma membrane lipids, after a sort of hemifusion process, followed by rapid death. Third, it is possible that virus-infected cells, on the point of undergoing apoptosis, fuse with CD4-expressing cells, in which case apoptosis is rapidly transmitted from one cell to the other and thus occurs in a sort of contagious fashion. Functionally, the gp120-gp41 heterodimer allows rapid transcytosis of the virus through CD4 negative cells such as simple epithelial monolayers of the intestinal, rectal and endocervical epithelial barriers. Both gp120 and gp41 specifically recognize glycosphingolipids galactosyl-ceramide (GalCer) or 3' sulfo-galactosyl-ceramide (GalS) present in the lipid rafts structures of epithelial cells. Binding to these alternative receptors allows the rapid transcytosis of the virus through the epithelial cells. This transcytotic vesicle-mediated transport of virions from the apical side to the basolateral side of the epithelial cells does not involve infection of the cells themselves. The chain is Envelope glycoprotein gp160 (env) from Homo sapiens (Human).